We begin with the raw amino-acid sequence, 229 residues long: Ribonuclease 3 (229 aa).

Positions 5–127 (LSRLERQLGY…LIGAIYLDAG (123 aa)) constitute an RNase III domain. Glutamate 40 lines the Mg(2+) pocket. The active site involves aspartate 44. Residues aspartate 113 and glutamate 116 each contribute to the Mg(2+) site. Glutamate 116 is an active-site residue. Residues 154-224 (DPKTRLQEFL…AAAALIALGV (71 aa)) form the DRBM domain.

This sequence belongs to the ribonuclease III family. In terms of assembly, homodimer. Mg(2+) serves as cofactor.

It is found in the cytoplasm. It carries out the reaction Endonucleolytic cleavage to 5'-phosphomonoester.. Its function is as follows. Digests double-stranded RNA. Involved in the processing of primary rRNA transcript to yield the immediate precursors to the large and small rRNAs (23S and 16S). Processes some mRNAs, and tRNAs when they are encoded in the rRNA operon. Processes pre-crRNA and tracrRNA of type II CRISPR loci if present in the organism. This chain is Ribonuclease 3, found in Pseudomonas syringae pv. syringae (strain B728a).